Reading from the N-terminus, the 199-residue chain is MSCTPVSTKCNDIWIDFSCTGPSVSELQKKEPNAWAAILRSQKNQQTAEDDTIIGSICDKQGLCSKDEYAYSQYCACVNSGTLWAECAFAPCNGNKNAYKTTEQRNILTNKQCPSGLTICQNIAEYGGTGNISDLYQNFNCNSVINTFLINVMNHPFLTLILIILILVIIYRLMSSSAAKQNGDKLPPPSLIFSNLNNF.

The N-linked (GlcNAc...) asparagine; by host glycan is linked to asparagine 131. Residues 150-170 form a helical membrane-spanning segment; it reads INVMNHPFLTLILIILILVII.

It belongs to the asfivirus E199L family. In terms of assembly, interacts with host PYCR2; this interaction results in autophagy activation.

Its subcellular location is the virion membrane. It localises to the host membrane. Functionally, essential for viral fusion with host endosomal membrane and core release. Not required for virus morphogenesis and egress. Induces complete autophagy through the interaction with and down-regulation of host PYCR2. The chain is Inner membrane protein E199L from African swine fever virus (isolate Pig/Kenya/KEN-50/1950) (ASFV).